The sequence spans 317 residues: Acetyl-coenzyme A carboxylase carboxyl transferase subunit alpha (317 aa).

The CoA carboxyltransferase C-terminal domain occupies 38–292 (TLEERLARLE…DNIIKQSLVE (255 aa)).

This sequence belongs to the AccA family. In terms of assembly, acetyl-CoA carboxylase is a heterohexamer composed of biotin carboxyl carrier protein (AccB), biotin carboxylase (AccC) and two subunits each of ACCase subunit alpha (AccA) and ACCase subunit beta (AccD).

Its subcellular location is the cytoplasm. The enzyme catalyses N(6)-carboxybiotinyl-L-lysyl-[protein] + acetyl-CoA = N(6)-biotinyl-L-lysyl-[protein] + malonyl-CoA. It participates in lipid metabolism; malonyl-CoA biosynthesis; malonyl-CoA from acetyl-CoA: step 1/1. In terms of biological role, component of the acetyl coenzyme A carboxylase (ACC) complex. First, biotin carboxylase catalyzes the carboxylation of biotin on its carrier protein (BCCP) and then the CO(2) group is transferred by the carboxyltransferase to acetyl-CoA to form malonyl-CoA. This is Acetyl-coenzyme A carboxylase carboxyl transferase subunit alpha from Oceanobacillus iheyensis (strain DSM 14371 / CIP 107618 / JCM 11309 / KCTC 3954 / HTE831).